The chain runs to 741 residues: Beta-galactosidase 10 (741 aa).

Positions 1–29 are cleaved as a signal peptide; that stretch reads MNRVTTESIASTAILVVMVFLFSWRSIEA. N-linked (GlcNAc...) asparagine glycosylation occurs at Asn31. Glu188 serves as the catalytic Proton donor. Glu257 (nucleophile) is an active-site residue. 5 N-linked (GlcNAc...) asparagine glycosylation sites follow: Asn358, Asn396, Asn469, Asn525, and Asn583.

The protein belongs to the glycosyl hydrolase 35 family. In terms of tissue distribution, ubiquitous.

It localises to the secreted. The protein resides in the extracellular space. The protein localises to the apoplast. The enzyme catalyses Hydrolysis of terminal non-reducing beta-D-galactose residues in beta-D-galactosides.. The sequence is that of Beta-galactosidase 10 (BGAL10) from Arabidopsis thaliana (Mouse-ear cress).